The chain runs to 482 residues: UDP-N-acetylmuramate--L-alanine ligase (482 aa).

123–129 is an ATP binding site; that stretch reads GTHGKTT.

This sequence belongs to the MurCDEF family.

It is found in the cytoplasm. The catalysed reaction is UDP-N-acetyl-alpha-D-muramate + L-alanine + ATP = UDP-N-acetyl-alpha-D-muramoyl-L-alanine + ADP + phosphate + H(+). It functions in the pathway cell wall biogenesis; peptidoglycan biosynthesis. Functionally, cell wall formation. The polypeptide is UDP-N-acetylmuramate--L-alanine ligase (Pseudomonas putida (strain ATCC 47054 / DSM 6125 / CFBP 8728 / NCIMB 11950 / KT2440)).